Here is a 686-residue protein sequence, read N- to C-terminus: Methionine--tRNA ligase (686 aa).

The short motif at 15–25 is the 'HIGH' region element; sequence PYANGPIHLGH. 4 residues coordinate Zn(2+): C146, C149, C159, and C162. A 'KMSKS' region motif is present at residues 332–336; that stretch reads KMSKS. Residue K335 coordinates ATP. One can recognise a tRNA-binding domain in the interval 585 to 686; sequence TFAKTDLRVA…DGAKPGQRIM (102 aa).

Belongs to the class-I aminoacyl-tRNA synthetase family. MetG type 1 subfamily. In terms of assembly, homodimer. Requires Zn(2+) as cofactor.

It is found in the cytoplasm. It carries out the reaction tRNA(Met) + L-methionine + ATP = L-methionyl-tRNA(Met) + AMP + diphosphate. Functionally, is required not only for elongation of protein synthesis but also for the initiation of all mRNA translation through initiator tRNA(fMet) aminoacylation. The protein is Methionine--tRNA ligase of Psychromonas ingrahamii (strain DSM 17664 / CCUG 51855 / 37).